A 179-amino-acid chain; its full sequence is Transcription factor 21 (179 aa).

The interval 23–87 is disordered; sequence IKLDPNKEFG…QVQRNAANAR (65 aa). The span at 34–46 shows a compositional bias: polar residues; sequence SNDSNEESSTCDN. Basic residues predominate over residues 50-64; that stretch reads KKGRGTSGKRRKAPS. Over residues 70-80 the composition is skewed to polar residues; the sequence is GNINQEGKQVQ. A bHLH domain is found at 79-131; it reads VQRNAANARERARMRVLSKAFSRLKTTLPWVPPDTKLSKLDTLRLASSYIAHL.

Efficient DNA binding requires dimerization with another bHLH protein.

The protein resides in the nucleus. Its function is as follows. Involved in epithelial-mesenchymal interactions in kidney and lung morphogenesis that include epithelial differentiation and branching morphogenesis. This Xenopus tropicalis (Western clawed frog) protein is Transcription factor 21 (tcf21).